We begin with the raw amino-acid sequence, 553 residues long: Zinc finger protein with KRAB and SCAN domains 3 (553 aa).

A disordered region spans residues 28–49 (EQEESSPLAEETSWLGSPGPDR). Phosphoserine occurs at positions 33 and 44. The 83-residue stretch at 51–133 (RQRFRAFRYP…ALLEYLDRQL (83 aa)) folds into the SCAN box domain. T136 is subject to Phosphothreonine. K176 participates in a covalent cross-link: Glycyl lysine isopeptide (Lys-Gly) (interchain with G-Cter in SUMO2). Residue T206 is modified to Phosphothreonine. One can recognise a KRAB domain in the interval 213 to 273 (LKMEDVAPVL…RAEEYRDQKP (61 aa)). The residue at position 223 (S223) is a Phosphoserine. C2H2-type zinc fingers lie at residues 313–335 (FYCR…KRIH), 341–363 (YECE…QRVH), 369–391 (YECE…QRTH), 397–419 (YECD…HRIH), and 425–447 (YQCN…QRTH). T448 bears the Phosphothreonine mark. C2H2-type zinc fingers lie at residues 479-501 (YQCN…QKVH) and 507-529 (FECQ…QRRH).

Belongs to the krueppel C2H2-type zinc-finger protein family. In terms of tissue distribution, expressed in heart, brain, spleen, lung, liver, skeletal muscle, kidney and testis.

It is found in the nucleus. It localises to the cytoplasm. Its function is as follows. Transcriptional factor that binds to the consensus sequence 5'-[GT][AG][AGT]GGGG-3' and acts as a repressor of autophagy. Specifically represses expression of genes involved in autophagy and lysosome biogenesis/function such as MAP1LC3B, ULK1 or WIPI2. Associates with chromatin at the ITGB4 and VEGF promoters. This chain is Zinc finger protein with KRAB and SCAN domains 3 (Zkscan3), found in Mus musculus (Mouse).